Here is an 83-residue protein sequence, read N- to C-terminus: Protein FAM240A (83 aa).

Belongs to the FAM240 family.

The sequence is that of Protein FAM240A from Homo sapiens (Human).